We begin with the raw amino-acid sequence, 1780 residues long: Protein TIC 214 (1780 aa).

Transmembrane regions (helical) follow at residues 19 to 39 (IINS…FSIG), 68 to 88 (FIAG…HLAL), 91 to 111 (PHTI…WNNN), 133 to 153 (VFLN…SSML), 176 to 196 (VGWL…LVWI), and 227 to 247 (IFSI…PSPI). The interval 251–275 (KLKGTSETEERGGTKQDQEVSTEEA) is disordered. The span at 254-268 (GTSETEERGGTKQDQ) shows a compositional bias: basic and acidic residues.

It belongs to the TIC214 family. Part of the Tic complex.

The protein resides in the plastid. It localises to the chloroplast inner membrane. Involved in protein precursor import into chloroplasts. May be part of an intermediate translocation complex acting as a protein-conducting channel at the inner envelope. The chain is Protein TIC 214 from Draba nemorosa (Woodland whitlowgrass).